The following is a 242-amino-acid chain: Triosephosphate isomerase (242 aa).

9–11 (NWK) contacts substrate. Catalysis depends on His-99, which acts as the Electrophile. Glu-169 functions as the Proton acceptor in the catalytic mechanism. Residues Gly-175, Ser-207, and 228-229 (GG) each bind substrate.

It belongs to the triosephosphate isomerase family. Homodimer.

The protein localises to the cytoplasm. It catalyses the reaction D-glyceraldehyde 3-phosphate = dihydroxyacetone phosphate. Its pathway is carbohydrate biosynthesis; gluconeogenesis. It functions in the pathway carbohydrate degradation; glycolysis; D-glyceraldehyde 3-phosphate from glycerone phosphate: step 1/1. In terms of biological role, involved in the gluconeogenesis. Catalyzes stereospecifically the conversion of dihydroxyacetone phosphate (DHAP) to D-glyceraldehyde-3-phosphate (G3P). The polypeptide is Triosephosphate isomerase (Mycoplasma mobile (strain ATCC 43663 / 163K / NCTC 11711) (Mesomycoplasma mobile)).